Consider the following 227-residue polypeptide: Ubiquitin domain-containing protein 1 (227 aa).

Residues Met1–Lys35 are disordered. Residues Gly24–Lys35 show a composition bias toward basic and acidic residues. The Ubiquitin-like domain maps to Phe149–Pro224.

In terms of assembly, interacts with UBTD1.

Its function is as follows. May be involved in the regulation of cellular senescence through a positive feedback loop with TP53. Is a TP53 downstream target gene that increases the stability of TP53 protein by promoting the ubiquitination and degradation of MDM2. In Homo sapiens (Human), this protein is Ubiquitin domain-containing protein 1 (UBTD1).